Consider the following 124-residue polypeptide: Meiotically up-regulated gene 103 protein (124 aa).

It localises to the nucleus. Its subcellular location is the nucleolus. Has a role in meiosis. The chain is Meiotically up-regulated gene 103 protein (mug103) from Schizosaccharomyces pombe (strain 972 / ATCC 24843) (Fission yeast).